Reading from the N-terminus, the 201-residue chain is Holliday junction branch migration complex subunit RuvA (201 aa).

The tract at residues 1–63 (MIAYIKGTLN…EDAQILFGFQ (63 aa)) is domain I. The domain II stretch occupies residues 64 to 142 (NRDEKYLFTK…SVFSITDEQQ (79 aa)). The tract at residues 143-149 (KSSVSNV) is flexible linker. The tract at residues 150-201 (NNNEVYSEAMEALKALGYTDKEVKQVLPHLKKDNDALSVDEAIRKALALLAK) is domain III.

This sequence belongs to the RuvA family. As to quaternary structure, homotetramer. Forms an RuvA(8)-RuvB(12)-Holliday junction (HJ) complex. HJ DNA is sandwiched between 2 RuvA tetramers; dsDNA enters through RuvA and exits via RuvB. An RuvB hexamer assembles on each DNA strand where it exits the tetramer. Each RuvB hexamer is contacted by two RuvA subunits (via domain III) on 2 adjacent RuvB subunits; this complex drives branch migration. In the full resolvosome a probable DNA-RuvA(4)-RuvB(12)-RuvC(2) complex forms which resolves the HJ.

The protein localises to the cytoplasm. Its function is as follows. The RuvA-RuvB-RuvC complex processes Holliday junction (HJ) DNA during genetic recombination and DNA repair, while the RuvA-RuvB complex plays an important role in the rescue of blocked DNA replication forks via replication fork reversal (RFR). RuvA specifically binds to HJ cruciform DNA, conferring on it an open structure. The RuvB hexamer acts as an ATP-dependent pump, pulling dsDNA into and through the RuvAB complex. HJ branch migration allows RuvC to scan DNA until it finds its consensus sequence, where it cleaves and resolves the cruciform DNA. This chain is Holliday junction branch migration complex subunit RuvA, found in Oceanobacillus iheyensis (strain DSM 14371 / CIP 107618 / JCM 11309 / KCTC 3954 / HTE831).